The following is a 433-amino-acid chain: Adenylosuccinate synthetase (433 aa).

GTP-binding positions include 11–17 (GDEGKGK) and 39–41 (GHT). Aspartate 12 functions as the Proton acceptor in the catalytic mechanism. Aspartate 12 and glycine 39 together coordinate Mg(2+). IMP is bound by residues 12-15 (DEGK), 37-40 (NAGH), threonine 134, arginine 148, asparagine 230, threonine 245, and arginine 309. The active-site Proton donor is histidine 40. 305–311 (VTTGRKR) serves as a coordination point for substrate. GTP contacts are provided by residues arginine 311, 337-339 (KLD), and 419-421 (GTG).

It belongs to the adenylosuccinate synthetase family. As to quaternary structure, homodimer. The cofactor is Mg(2+).

It localises to the cytoplasm. The enzyme catalyses IMP + L-aspartate + GTP = N(6)-(1,2-dicarboxyethyl)-AMP + GDP + phosphate + 2 H(+). It participates in purine metabolism; AMP biosynthesis via de novo pathway; AMP from IMP: step 1/2. Its function is as follows. Plays an important role in the de novo pathway and in the salvage pathway of purine nucleotide biosynthesis. Catalyzes the first committed step in the biosynthesis of AMP from IMP. The protein is Adenylosuccinate synthetase of Saccharomyces cerevisiae (strain YJM789) (Baker's yeast).